A 315-amino-acid polypeptide reads, in one-letter code: MMTALILKRVAQAIPVMLIVAILTFLLMKLLPGDPAILIAGDGASPETVERIRVELGLDQPTVVQLGQWLWNLFHFDLGRSFLLSQPVSQAIAERLPVTISLALLAFAITIPVGIIMGVVAAYLRDSWFDTGVMSLALLGVSVPSFWLAILAVILFSVTLGWFPSAGYVPFLDSPLGWLRSLILPASILALFQIGYLARMTRSEMLEVMDQDYIRTARSKGVSEYSVLSTHAFRNALVSVLTVSGYIFSLLIGGSVVIEQIFALPGLGRLLVQAILARDLPVVQGTMLFLGFLFVAINVLVDILYTIADPRVRYD.

6 helical membrane passes run 13 to 33 (AIPVMLIVAILTFLLMKLLPG), 102 to 122 (LALLAFAITIPVGIIMGVVAA), 136 to 156 (LALLGVSVPSFWLAILAVILF), 178 to 198 (WLRSLILPASILALFQIGYLA), 238 to 258 (VSVLTVSGYIFSLLIGGSVVI), and 287 to 307 (MLFLGFLFVAINVLVDILYTI). Residues 96–305 (LPVTISLALL…AINVLVDILY (210 aa)) form the ABC transmembrane type-1 domain.

The protein belongs to the binding-protein-dependent transport system permease family. As to quaternary structure, the complex is composed of two ATP-binding proteins (BMEII0205 and BMEII0206), two transmembrane proteins (BMEII0207/BMEII0208 and BMEII0209) and a solute-binding protein (BMEII0210).

It localises to the cell inner membrane. In terms of biological role, probably part of an ABC transporter complex that could be involved in peptide import. Probably responsible for the translocation of the substrate across the membrane. This chain is Putative peptide transport system permease protein BMEII0209, found in Brucella melitensis biotype 1 (strain ATCC 23456 / CCUG 17765 / NCTC 10094 / 16M).